Here is a 220-residue protein sequence, read N- to C-terminus: UPF0502 protein CV_4303 (220 aa).

It belongs to the UPF0502 family.

The polypeptide is UPF0502 protein CV_4303 (Chromobacterium violaceum (strain ATCC 12472 / DSM 30191 / JCM 1249 / CCUG 213 / NBRC 12614 / NCIMB 9131 / NCTC 9757 / MK)).